We begin with the raw amino-acid sequence, 185 residues long: MLEYISSLPKQPISEEEKEGLIEMREEEKLARDVYLTLYNKWKLQIFKNIAESEQTHMDAVKYLLEKYNIPDPVKNDSIGVFSNPKFEELYKKLVEKGDKSEVDALKVGATIEDLDIADLEKWINKTDNEDIKFVYENLMKGSRNHMRAFVRMLNNYGSNYTPQYISKEEYEEIISSSTERGMNR.

This is an uncharacterized protein from Methanocaldococcus jannaschii (strain ATCC 43067 / DSM 2661 / JAL-1 / JCM 10045 / NBRC 100440) (Methanococcus jannaschii).